Consider the following 153-residue polypeptide: Transcription antitermination protein NusB (153 aa).

This sequence belongs to the NusB family.

Involved in transcription antitermination. Required for transcription of ribosomal RNA (rRNA) genes. Binds specifically to the boxA antiterminator sequence of the ribosomal RNA (rrn) operons. The protein is Transcription antitermination protein NusB of Nitratidesulfovibrio vulgaris (strain ATCC 29579 / DSM 644 / CCUG 34227 / NCIMB 8303 / VKM B-1760 / Hildenborough) (Desulfovibrio vulgaris).